Consider the following 539-residue polypeptide: Putative S-adenosyl-L-methionine-dependent methyltransferase MAP_4079 (539 aa).

S-adenosyl-L-methionine is bound by residues aspartate 134 and 163-164 (DL). Residues 290–392 (AGYGRGRRRP…RGEPGERGGQ (103 aa)) form a disordered region. Residues 301 to 313 (SATSCRGTCSSPR) show a composition bias toward polar residues. The span at 341–351 (HGFGNQCGGPD) shows a compositional bias: gly residues.

Belongs to the UPF0677 family.

Exhibits S-adenosyl-L-methionine-dependent methyltransferase activity. In Mycolicibacterium paratuberculosis (strain ATCC BAA-968 / K-10) (Mycobacterium paratuberculosis), this protein is Putative S-adenosyl-L-methionine-dependent methyltransferase MAP_4079.